The primary structure comprises 177 residues: Large ribosomal subunit protein uL6 (177 aa).

The protein belongs to the universal ribosomal protein uL6 family. In terms of assembly, part of the 50S ribosomal subunit.

Functionally, this protein binds to the 23S rRNA, and is important in its secondary structure. It is located near the subunit interface in the base of the L7/L12 stalk, and near the tRNA binding site of the peptidyltransferase center. This is Large ribosomal subunit protein uL6 from Teredinibacter turnerae (strain ATCC 39867 / T7901).